The sequence spans 156 residues: 6,7-dimethyl-8-ribityllumazine synthase (156 aa).

Residues Phe23, 57–59 (AYE), and 81–83 (AII) each bind 5-amino-6-(D-ribitylamino)uracil. A (2S)-2-hydroxy-3-oxobutyl phosphate-binding site is contributed by 86-87 (GT). His89 (proton donor) is an active-site residue. Residue Phe114 coordinates 5-amino-6-(D-ribitylamino)uracil. Arg128 contacts (2S)-2-hydroxy-3-oxobutyl phosphate.

The protein belongs to the DMRL synthase family.

The catalysed reaction is (2S)-2-hydroxy-3-oxobutyl phosphate + 5-amino-6-(D-ribitylamino)uracil = 6,7-dimethyl-8-(1-D-ribityl)lumazine + phosphate + 2 H2O + H(+). The protein operates within cofactor biosynthesis; riboflavin biosynthesis; riboflavin from 2-hydroxy-3-oxobutyl phosphate and 5-amino-6-(D-ribitylamino)uracil: step 1/2. Catalyzes the formation of 6,7-dimethyl-8-ribityllumazine by condensation of 5-amino-6-(D-ribitylamino)uracil with 3,4-dihydroxy-2-butanone 4-phosphate. This is the penultimate step in the biosynthesis of riboflavin. The sequence is that of 6,7-dimethyl-8-ribityllumazine synthase from Helicobacter pylori (strain Shi470).